The following is a 413-amino-acid chain: DNA primase large subunit PriL (413 aa).

Residues cysteine 230, cysteine 301, cysteine 310, and cysteine 317 each contribute to the [4Fe-4S] cluster site. 3 stretches are compositionally biased toward basic and acidic residues: residues 340 to 356 (MEKEKEEKEEKEKQEEK), 362 to 381 (KEKQEEIKKKKKKEKQEEKG), and 388 to 413 (KKRERKQEKETKRREGKEKQEEKKRI). The tract at residues 340 to 413 (MEKEKEEKEE…KEKQEEKKRI (74 aa)) is disordered.

It belongs to the eukaryotic-type primase large subunit family. Heterodimer of a small subunit (PriS) and a large subunit (PriL). [4Fe-4S] cluster is required as a cofactor.

Its function is as follows. Regulatory subunit of DNA primase, an RNA polymerase that catalyzes the synthesis of short RNA molecules used as primers for DNA polymerase during DNA replication. Stabilizes and modulates the activity of the small subunit, increasing the rate of DNA synthesis, and conferring RNA synthesis capability. The DNA polymerase activity may enable DNA primase to also catalyze primer extension after primer synthesis. May also play a role in DNA repair. The sequence is that of DNA primase large subunit PriL from Methanosarcina barkeri (strain Fusaro / DSM 804).